Consider the following 240-residue polypeptide: NADH-quinone oxidoreductase subunit I 2 (240 aa).

4Fe-4S ferredoxin-type domains lie at 57–86 and 97–126; these read TDLR…IEWH and DRFA…MGYD. [4Fe-4S] cluster contacts are provided by cysteine 66, cysteine 69, cysteine 72, cysteine 76, cysteine 106, cysteine 109, cysteine 112, and cysteine 116. A disordered region spans residues 185–240; it reads IHGYLGRPPLPKGYEPELKPQFRKPAEEAAEAQQAEAAGQPAAEPGKTNGEEAGQP. Residues 198 to 211 are compositionally biased toward basic and acidic residues; that stretch reads YEPELKPQFRKPAE. The segment covering 215-230 has biased composition (low complexity); it reads EAQQAEAAGQPAAEPG.

It belongs to the complex I 23 kDa subunit family. NDH-1 is composed of 14 different subunits. Subunits NuoA, H, J, K, L, M, N constitute the membrane sector of the complex. [4Fe-4S] cluster is required as a cofactor.

The protein resides in the cell membrane. It catalyses the reaction a quinone + NADH + 5 H(+)(in) = a quinol + NAD(+) + 4 H(+)(out). NDH-1 shuttles electrons from NADH, via FMN and iron-sulfur (Fe-S) centers, to quinones in the respiratory chain. The immediate electron acceptor for the enzyme in this species is believed to be ubiquinone. Couples the redox reaction to proton translocation (for every two electrons transferred, four hydrogen ions are translocated across the cytoplasmic membrane), and thus conserves the redox energy in a proton gradient. This is NADH-quinone oxidoreductase subunit I 2 from Symbiobacterium thermophilum (strain DSM 24528 / JCM 14929 / IAM 14863 / T).